A 325-amino-acid chain; its full sequence is Elongation factor P--(R)-beta-lysine ligase (325 aa).

Position 76–78 (S76–E78) interacts with substrate. ATP is bound by residues R100–E102 and N109. Position 118 (Y118) interacts with substrate. E244–L245 contributes to the ATP binding site. A substrate-binding site is contributed by E251. G300 provides a ligand contact to ATP.

It belongs to the class-II aminoacyl-tRNA synthetase family. EpmA subfamily. As to quaternary structure, homodimer.

It carries out the reaction D-beta-lysine + L-lysyl-[protein] + ATP = N(6)-((3R)-3,6-diaminohexanoyl)-L-lysyl-[protein] + AMP + diphosphate + H(+). Functionally, with EpmB is involved in the beta-lysylation step of the post-translational modification of translation elongation factor P (EF-P) on 'Lys-34'. Catalyzes the ATP-dependent activation of (R)-beta-lysine produced by EpmB, forming a lysyl-adenylate, from which the beta-lysyl moiety is then transferred to the epsilon-amino group of EF-P 'Lys-34'. The chain is Elongation factor P--(R)-beta-lysine ligase from Salmonella typhi.